We begin with the raw amino-acid sequence, 107 residues long: Putative double-stranded DNA mimic protein CGSHiGG_01135 (107 aa).

It belongs to the putative dsDNA mimic protein family.

Functionally, may act as a double-stranded DNA (dsDNA) mimic. Probably regulates the activity of a dsDNA-binding protein. The polypeptide is Putative double-stranded DNA mimic protein CGSHiGG_01135 (Haemophilus influenzae (strain PittGG)).